The sequence spans 263 residues: Lens fiber major intrinsic protein (263 aa).

The Cytoplasmic portion of the chain corresponds to 1-9; it reads MWELRSASF. The chain crosses the membrane as a helical span at residues 10–29; that stretch reads WRAICAEFFASLFYVFFGLG. Over 30 to 41 the chain is Extracellular; sequence ASLRWAPGPLHV. A helical membrane pass occupies residues 42–59; it reads LQVALAFGLALATLVQAV. At 60–61 the chain is on the cytoplasmic side; it reads GH. The discontinuously helical intramembrane region spans 62–77; that stretch reads ISGAHVNPAVTFAFLV. Residues 68-70 carry the NPA 1 motif; that stretch reads NPA. Topologically, residues 78–82 are cytoplasmic; the sequence is GSQMS. The helical transmembrane segment at 83–106 threads the bilayer; the sequence is LLRAICYMVAQLLGAVAGAAVLYS. Residues 107 to 127 lie on the Extracellular side of the membrane; the sequence is VTPPAVRGNLALNTLHPGVSV. Residues 128–148 form a helical membrane-spanning segment; the sequence is GQATIVEIFLTLQFVLCIFAT. Topologically, residues 149-156 are cytoplasmic; that stretch reads YDERRNGR. The helical transmembrane segment at 157-175 threads the bilayer; sequence LGSVALAVGFSLTLGHLFG. At 176–178 the chain is on the extracellular side; that stretch reads MYY. The discontinuously helical intramembrane region spans 179–193; the sequence is TGAGMNPARSFAPAI. An NPA 2 motif is present at residues 184 to 186; sequence NPA. Residues 194 to 200 are Extracellular-facing; it reads LTRNFTN. Residues 201 to 222 form a helical membrane-spanning segment; that stretch reads HWVYWVGPVIGAGLGSLLYDFL. Residues 223–263 lie on the Cytoplasmic side of the membrane; it reads LFPRLKSVSERLSILKGSRPSESNGQPEVTGEPVELKTQAL. The segment at 227–237 is interaction with CALM; the sequence is LKSVSERLSIL. Ser-235 is subject to Phosphoserine. The tract at residues 239 to 263 is disordered; that stretch reads GSRPSESNGQPEVTGEPVELKTQAL. Residue Ser-243 is modified to Phosphoserine; by PKA. The residue at position 245 (Ser-245) is a Phosphoserine. Residue Asn-246 is modified to Deamidated asparagine.

The protein belongs to the MIP/aquaporin (TC 1.A.8) family. As to quaternary structure, homotetramer; each monomer provides an independent water pore. Two homotetramers on opposing membranes can dimerize, forming a cell-cell junction. Interacts with CALM; the calcium-calmodulin/CALM complex interacts with the cytoplasmic domains of two aquaporins, leading to channel closure. Interacts with BFSP1 (via C-terminus); prevents calcium-dependent inhibition of the water channel activity. Fatty acylated at Met-1 and Lys-238. The acyl modifications, in decreasing order of ion abundance, are: oleoyl (C18:1) &gt; palmitoyl (C16:0) &gt; stearoyl (C18:0) &gt; eicosenoyl (C20:1) &gt; dihomo-gamma-linolenoyl (C20:3) &gt; palmitoleoyl (C16:1) &gt; eicosadienoyl (C20:2). In terms of processing, subject to partial proteolytic cleavage in the eye lens core. Partial proteolysis promotes interactions between tetramers from adjoining membranes. In terms of tissue distribution, major component of lens fiber junctions.

It localises to the cell membrane. The protein resides in the cell junction. It carries out the reaction H2O(in) = H2O(out). Its activity is regulated as follows. The water channel activity is inhibited by calcium through calmodulin/CALM. Its function is as follows. Aquaporins form homotetrameric transmembrane channels, with each monomer independently mediating water transport across the plasma membrane along its osmotic gradient. Specifically expressed in lens fiber cells, this aquaporin is crucial for maintaining lens water homeostasis and transparency. Beyond water permeability, it also acts as a cell-to-cell adhesion molecule, forming thin junctions between lens fiber cells that are essential for maintaining the ordered structure and transparency of the lens. The polypeptide is Lens fiber major intrinsic protein (Bos taurus (Bovine)).